Here is a 541-residue protein sequence, read N- to C-terminus: MKVATSALLIGAAAAQQQQILKFPDSFSELKESSWTKPLQNLEESLKSLTGEARATWDEIAMMFPESFEKAAFFSEPKPHTRKQDSEWDHIIKGADIQSVWVENEKGEKEREIDGKLEQYSLRAKKVDPSVLGVDKVKQYSGYLDDEEEDKHLFYWFFESRNDPKNDPVVLWLNGGPGCSSLTGLFMELGPASITKDQKIKHNPYSWNSNASVIFLDQPVNVGYSYSSGSVSNTVAAGKDIYALLTLFFKQFPEYSHQSFHISGESYAGHYIPVFASEILSHKNRNINLQSVLIGNGLTDGLTQYEYYRPMACGEGGWPAVLDESQCKAMDNAYPRCASLIENCYNSESVWSCVPASIYCNNAMIGPYQRTGQNVYDVRKPCGSNSLCYDELDWIQGYLNKKEVMKAVGAEVSNYESCNFDINRNFLLQGDWMKPFHRVVPGILEKIPVLIYAGDADYICNWLGNKAWTEALEWPGAKAYNQAKMEDFKIDGDGKTVGQVKSSGNFTFMRLHAGGHMVPYDQPEASLEMLNRWLGGGFWKA.

Positions 1–17 are cleaved as a signal peptide; that stretch reads MKVATSALLIGAAAAQQ. A propeptide spanning residues 18 to 125 is cleaved from the precursor; sequence QQILKFPDSF…KLEQYSLRAK (108 aa). 5 cysteine pairs are disulfide-bonded: cysteine 179-cysteine 418, cysteine 313-cysteine 327, cysteine 337-cysteine 360, cysteine 344-cysteine 353, and cysteine 382-cysteine 388. N-linked (GlcNAc...) asparagine glycosylation is present at asparagine 210. Residue serine 266 is part of the active site. The active site involves aspartate 457. Asparagine 505 carries an N-linked (GlcNAc...) asparagine glycan. Histidine 516 is a catalytic residue.

It belongs to the peptidase S10 family.

It localises to the vacuole. It catalyses the reaction Release of a C-terminal amino acid with broad specificity.. In terms of biological role, vacuolar carboxypeptidase involved in degradation of small peptides. Digests preferentially peptides containing an aliphatic or hydrophobic residue in P1' position, as well as methionine, leucine or phenylalanine in P1 position of ester substrate. This Pyrenophora tritici-repentis (strain Pt-1C-BFP) (Wheat tan spot fungus) protein is Carboxypeptidase Y homolog A (cpyA).